Consider the following 143-residue polypeptide: FAD synthase (143 aa).

ATP contacts are provided by residues 11-12 (TF), 16-19 (HPGH), and Asp-94.

It belongs to the archaeal FAD synthase family. As to quaternary structure, homodimer. A divalent metal cation is required as a cofactor.

The enzyme catalyses FMN + ATP + H(+) = FAD + diphosphate. The protein operates within cofactor biosynthesis; FAD biosynthesis; FAD from FMN: step 1/1. Catalyzes the transfer of the AMP portion of ATP to flavin mononucleotide (FMN) to produce flavin adenine dinucleotide (FAD) coenzyme. The polypeptide is FAD synthase (Halomicrobium mukohataei (strain ATCC 700874 / DSM 12286 / JCM 9738 / NCIMB 13541) (Haloarcula mukohataei)).